A 443-amino-acid polypeptide reads, in one-letter code: Thymidine phosphorylase (443 aa).

It belongs to the thymidine/pyrimidine-nucleoside phosphorylase family. As to quaternary structure, homodimer.

It carries out the reaction thymidine + phosphate = 2-deoxy-alpha-D-ribose 1-phosphate + thymine. Its pathway is pyrimidine metabolism; dTMP biosynthesis via salvage pathway; dTMP from thymine: step 1/2. Functionally, the enzymes which catalyze the reversible phosphorolysis of pyrimidine nucleosides are involved in the degradation of these compounds and in their utilization as carbon and energy sources, or in the rescue of pyrimidine bases for nucleotide synthesis. The chain is Thymidine phosphorylase from Shewanella oneidensis (strain ATCC 700550 / JCM 31522 / CIP 106686 / LMG 19005 / NCIMB 14063 / MR-1).